A 118-amino-acid chain; its full sequence is Ribosome-binding factor A (118 aa).

The protein belongs to the RbfA family. In terms of assembly, monomer. Binds 30S ribosomal subunits, but not 50S ribosomal subunits or 70S ribosomes.

The protein localises to the cytoplasm. In terms of biological role, one of several proteins that assist in the late maturation steps of the functional core of the 30S ribosomal subunit. Associates with free 30S ribosomal subunits (but not with 30S subunits that are part of 70S ribosomes or polysomes). Required for efficient processing of 16S rRNA. May interact with the 5'-terminal helix region of 16S rRNA. This chain is Ribosome-binding factor A, found in Bacillus cereus (strain AH820).